Reading from the N-terminus, the 245-residue chain is 1-(5-phosphoribosyl)-5-[(5-phosphoribosylamino)methylideneamino] imidazole-4-carboxamide isomerase (245 aa).

The active-site Proton acceptor is Asp-7. The Proton donor role is filled by Asp-129.

It belongs to the HisA/HisF family.

It localises to the cytoplasm. The catalysed reaction is 1-(5-phospho-beta-D-ribosyl)-5-[(5-phospho-beta-D-ribosylamino)methylideneamino]imidazole-4-carboxamide = 5-[(5-phospho-1-deoxy-D-ribulos-1-ylimino)methylamino]-1-(5-phospho-beta-D-ribosyl)imidazole-4-carboxamide. It functions in the pathway amino-acid biosynthesis; L-histidine biosynthesis; L-histidine from 5-phospho-alpha-D-ribose 1-diphosphate: step 4/9. The polypeptide is 1-(5-phosphoribosyl)-5-[(5-phosphoribosylamino)methylideneamino] imidazole-4-carboxamide isomerase (Vibrio campbellii (strain ATCC BAA-1116)).